The chain runs to 67 residues: Large ribosomal subunit protein bL35 (67 aa).

This sequence belongs to the bacterial ribosomal protein bL35 family.

The chain is Large ribosomal subunit protein bL35 from Picosynechococcus sp. (strain ATCC 27264 / PCC 7002 / PR-6) (Agmenellum quadruplicatum).